The following is a 38-amino-acid chain: Small toxic protein BsrG (38 aa).

Residues 11-31 (INFGGLILNTVLLIFNIMMIV) form a helical membrane-spanning segment.

It is found in the cell membrane. Functionally, toxic component of a type I toxin-antitoxin (TA) system; expression in the absence of cognate antisense antitoxin SR4 RNA leads to cell lysis. Induced expression causes membrane invaginations that dislocate the cell wall synthesis machinery, leading to eventual death. Unlike many type I TA systems it does not form pores. Base pairing occurs between the 3' UTRs of bsrG mRNA and SR4 RNA, which leads to initiation of degradation by RNase III (rnc) followed by the action of RNase Y (rny) and RNase R (rnr). Not toxic when expressed in E.coli. When induced during logarithmic growth it only slowly exerts its toxic effect. Expression during log growth leads to significant disturbances of cell envelope biosynthesis and cell morphology, causing cell membrane invaginations and delocalization of cell division and cell wall synthesis machinery. Cell lysis depends on mreB, lytC and lytD, suggesting expression of bsrG triggers autolysis rather than disintegration of the membrane. Additionally expression of bsrG also inhibits transcription. This Bacillus subtilis (strain 168) protein is Small toxic protein BsrG.